The primary structure comprises 287 residues: ATP synthase gamma chain (287 aa).

This sequence belongs to the ATPase gamma chain family. F-type ATPases have 2 components, CF(1) - the catalytic core - and CF(0) - the membrane proton channel. CF(1) has five subunits: alpha(3), beta(3), gamma(1), delta(1), epsilon(1). CF(0) has three main subunits: a, b and c.

The protein localises to the cell inner membrane. In terms of biological role, produces ATP from ADP in the presence of a proton gradient across the membrane. The gamma chain is believed to be important in regulating ATPase activity and the flow of protons through the CF(0) complex. The polypeptide is ATP synthase gamma chain (Ruthia magnifica subsp. Calyptogena magnifica).